Reading from the N-terminus, the 239-residue chain is Sensory rhodopsin-1 (239 aa).

At Met-1–Ala-3 the chain is on the extracellular side. A helical membrane pass occupies residues Val-4–Leu-25. The Cytoplasmic portion of the chain corresponds to Tyr-26–His-34. A helical membrane pass occupies residues Gln-35–Ala-56. The Extracellular portion of the chain corresponds to Tyr-57–Val-70. Residues Gly-71 to Ala-92 form a helical membrane-spanning segment. At Gly-93–Ser-95 the chain is on the cytoplasmic side. The helical transmembrane segment at Arg-96–Val-118 threads the bilayer. Topologically, residues Thr-119–Thr-122 are extracellular. The chain crosses the membrane as a helical span at residues Leu-123 to Val-150. Over Pro-151–Val-153 the chain is Cytoplasmic. The chain crosses the membrane as a helical span at residues Pro-154–Gly-181. The Extracellular portion of the chain corresponds to Pro-182–Thr-189. A helical transmembrane segment spans residues Ala-190–Ser-222. N6-(retinylidene)lysine is present on Lys-205. Over Glu-223 to Asp-239 the chain is Cytoplasmic.

The protein belongs to the archaeal/bacterial/fungal opsin family. Interacts with HTR-I.

The protein resides in the cell membrane. In terms of biological role, involved in the control of phototaxis. Mediates both photoattractant (in the orange light) and photophobic (in the near UV light) responses. The signal is then transmitted to the sensory rhodopsin I transducer (HTR-I). The polypeptide is Sensory rhodopsin-1 (sopI) (Halobacterium salinarum (strain ATCC 29341 / DSM 671 / R1)).